The following is a 492-amino-acid chain: Probable cobyric acid synthase (492 aa).

Residues 248–434 form the GATase cobBQ-type domain; sequence PVRIAVVRLP…MHGLFQNPGA (187 aa). Cys327 functions as the Nucleophile in the catalytic mechanism. Residue His426 is part of the active site.

Belongs to the CobB/CobQ family. CobQ subfamily.

It functions in the pathway cofactor biosynthesis; adenosylcobalamin biosynthesis. In terms of biological role, catalyzes amidations at positions B, D, E, and G on adenosylcobyrinic A,C-diamide. NH(2) groups are provided by glutamine, and one molecule of ATP is hydrogenolyzed for each amidation. The chain is Probable cobyric acid synthase from Methanoculleus marisnigri (strain ATCC 35101 / DSM 1498 / JR1).